The primary structure comprises 417 residues: COP9 signalosome complex subunit 7a (417 aa).

One can recognise a PCI domain in the interval 2 to 179 (EQTKALNALE…EMVQINSVAA (178 aa)). The interval 240 to 417 (DEQKGAVPSS…KRGSKRKLTA (178 aa)) is disordered. A compositionally biased stretch (gly residues) spans 263–290 (RGGGGGGDGAGAGGSFRGSGYSRGGGLS). 3 stretches are compositionally biased toward low complexity: residues 291 to 311 (QGYR…SRQQ), 320 to 330 (SNQSGTNSLLT), and 343 to 352 (PSAVSPSAAA). Residues 367–379 (METGSGSGSGPLG) are compositionally biased toward gly residues. Acidic residues predominate over residues 385–405 (DMDDSEEDIDDDTMDLDDEGD).

This sequence belongs to the CSN7/EIF3M family. CSN7 subfamily. Component of the COP9 signalosome (CSN) complex.

It is found in the cytoplasm. It localises to the nucleus. Its function is as follows. Component of the COP9 signalosome (CSN) complex that acts as an regulator of the ubiquitin (Ubl) conjugation pathway by mediating the deneddylation of the cullin subunit of SCF-type E3 ubiquitin-protein ligase complexes. The CSN complex is involved in the regulation of the circadian clock through its control of the stability of the SCF(FWD1) complex. This chain is COP9 signalosome complex subunit 7a (csn-7a), found in Neurospora crassa (strain ATCC 24698 / 74-OR23-1A / CBS 708.71 / DSM 1257 / FGSC 987).